Here is a 623-residue protein sequence, read N- to C-terminus: MRVALGMLWLLALAWPPQARGFCPSQCSCSLHIMGDGSKARTVVCNDPDMTLPPASIPPDTSRLRLERTAIRRVPGEAFRPLGRLEQLWLPYNALSELNALMLRGLRRLRELRLPGNRLAAFPWAALRDAPKLRLLDLQANRLSAVPAEAARFLENLTFLDLSSNQLMRLPQELIVSWAHLETGIFPPGHHPRRVLGLQDNPWACDCRLYDLVHLLDGWAPNLAFIETELRCASPRSLAGVAFSQLELRKCQGPELHPGVASIRSLLGGTALLRCGATGVPGPEMSWRRANGRPLNGTVHQEVSSDGTSWTLLGLPAVSHLDSGDYICQAKNFLGASETVISLIVTEPPTSTEHSGSPGALWARTGGGGEAAAYNNKLVARHVPQIPKPAVLATGPSVPSTKEELTLEHFQMDALGELSDGRAGPSEARMVRSVKVVGDTYHSVSLVWKAPQAKNTTAFSVLYAVFGQHSMRRVIVQPGKTRVTITGLLPKTKYVACVCVQGLVPRKEQCVIFSTNEVVDAENTQQLINVVVISVAIVIALPLTLLVCCSALQKRCRKCFNKDSTEATVTYVNLERLGYSEDGLEELSRHSVSEADRLLSARSSVDFQAFGVKGGRRINEYFC.

The first 21 residues, 1–21 (MRVALGMLWLLALAWPPQARG), serve as a signal peptide directing secretion. In terms of domain architecture, LRRNT spans 22–59 (FCPSQCSCSLHIMGDGSKARTVVCNDPDMTLPPASIPP). Topologically, residues 22–526 (FCPSQCSCSL…EVVDAENTQQ (505 aa)) are lumenal. LRR repeat units follow at residues 60 to 81 (DTSRLRLERTAIRRVPGEAFRP), 84 to 105 (RLEQLWLPYNALSELNALMLRG), 108 to 129 (RLRELRLPGNRLAAFPWAALRD), 132 to 153 (KLRLLDLQANRLSAVPAEAARF), and 156 to 177 (NLTFLDLSSNQLMRLPQELIVS). An N-linked (GlcNAc...) asparagine glycan is attached at Asn156. Residues 201-253 (NPWACDCRLYDLVHLLDGWAPNLAFIETELRCASPRSLAGVAFSQLELRKCQG) form the LRRCT domain. Positions 266 to 335 (LLGGTALLRC…YICQAKNFLG (70 aa)) constitute an Ig-like C2-type domain. The cysteines at positions 275 and 328 are disulfide-linked. Residues Asn296 and Asn455 are each glycosylated (N-linked (GlcNAc...) asparagine). The 89-residue stretch at 430–518 (MVRSVKVVGD…QCVIFSTNEV (89 aa)) folds into the Fibronectin type-III domain. A helical membrane pass occupies residues 527-547 (LINVVVISVAIVIALPLTLLV). The Cytoplasmic portion of the chain corresponds to 548–623 (CCSALQKRCR…GGRRINEYFC (76 aa)). Residues 571 to 594 (YVNLERLGYSEDGLEELSRHSVSE) form an LRR 6 repeat.

As to quaternary structure, may form a homodimer. Interacts with LRIT2; may form a heterodimer with LRIT2. Interacts (via its N-terminal extracellular domain) with metabotropic glutamate receptor GRM6. Interacts (via its extreme C-terminus) with the scaffold protein FRMPD2 (via the third PDZ domain); the interaction leads to their colocalization in photoreceptor synapses.

It localises to the endoplasmic reticulum membrane. Its subcellular location is the cell projection. The protein resides in the dendrite. Functionally, photoreceptor synaptic protein essential for normal vision. Involved in synapse formation in cone photoreceptor cells. In Homo sapiens (Human), this protein is Leucine-rich repeat, immunoglobulin-like domain and transmembrane domain-containing protein 1 (LRIT1).